We begin with the raw amino-acid sequence, 271 residues long: ATP synthase subunit a (271 aa).

5 consecutive transmembrane segments (helical) span residues 40–60 (TINIDSMFFSVVLGLLFLVLF), 100–120 (LIAPLALTIFVWVFLMNLMDL), 146–166 (DVNVTLSMALGVFILILFYSI), 220–240 (LIFILIAGLLPWWSQWILNVP), and 242–262 (AIFHILIITLQAFIFMVLTIV).

This sequence belongs to the ATPase A chain family. F-type ATPases have 2 components, CF(1) - the catalytic core - and CF(0) - the membrane proton channel. CF(1) has five subunits: alpha(3), beta(3), gamma(1), delta(1), epsilon(1). CF(0) has three main subunits: a(1), b(2) and c(9-12). The alpha and beta chains form an alternating ring which encloses part of the gamma chain. CF(1) is attached to CF(0) by a central stalk formed by the gamma and epsilon chains, while a peripheral stalk is formed by the delta and b chains.

The protein localises to the cell inner membrane. In terms of biological role, key component of the proton channel; it plays a direct role in the translocation of protons across the membrane. The sequence is that of ATP synthase subunit a from Escherichia coli O8 (strain IAI1).